A 483-amino-acid chain; its full sequence is PRAME family member 12 (483 aa).

The stretch at 97–122 is one LRR 1; degenerate repeat; sequence RWKLQVLDLRNVDENFWGIWSGASAL. The LRR 2; degenerate repeat unit spans residues 177–201; it reads HVCCKELQIFGIAIHRIIEVLNTVE. An LRR 3; degenerate repeat occupies 202-228; it reads LDCIQEVEVCCPWELSILIRFAPYLGQ. An LRR 4; degenerate repeat occupies 229 to 264; that stretch reads MRNLRKLVLFNIHVSACIPLDRKEQFVIQFTSQFLK. LRR repeat units follow at residues 265–290, 291–322, 323–341, 347–374, and 375–399; these read LDYF…LRCL, QAPL…RQLK, ELDL…PLSV, EATL…ALSR, and CSQL…LLRH.

Belongs to the PRAME family.

The protein is PRAME family member 12 of Homo sapiens (Human).